A 451-amino-acid chain; its full sequence is Heat shock factor protein (451 aa).

The DNA-binding element occupies 12–117 (VPAFLAKLWT…LLENIKRKVN (106 aa)). 2 disordered regions span residues 210-273 (LNDS…LEAS) and 285-307 (LTPS…PISP). Residues 232–246 (PSSTSYPVSGFTDSS) show a composition bias toward polar residues.

It belongs to the HSF family. Homotrimer. Post-translationally, exhibits temperature-dependent phosphorylation.

Its subcellular location is the nucleus. Its function is as follows. DNA-binding protein that specifically binds heat shock promoter elements (HSE) and activates transcription. This Xenopus laevis (African clawed frog) protein is Heat shock factor protein (hsf1).